Here is a 133-residue protein sequence, read N- to C-terminus: Ribosome-binding factor A (133 aa).

The protein belongs to the RbfA family. In terms of assembly, monomer. Binds 30S ribosomal subunits, but not 50S ribosomal subunits or 70S ribosomes.

The protein resides in the cytoplasm. In terms of biological role, one of several proteins that assist in the late maturation steps of the functional core of the 30S ribosomal subunit. Associates with free 30S ribosomal subunits (but not with 30S subunits that are part of 70S ribosomes or polysomes). Required for efficient processing of 16S rRNA. May interact with the 5'-terminal helix region of 16S rRNA. The polypeptide is Ribosome-binding factor A (Yersinia enterocolitica).